The primary structure comprises 61 residues: Large ribosomal subunit protein uL30 (61 aa).

The protein belongs to the universal ribosomal protein uL30 family. As to quaternary structure, part of the 50S ribosomal subunit.

This is Large ribosomal subunit protein uL30 from Chlorobium phaeobacteroides (strain BS1).